Reading from the N-terminus, the 327-residue chain is tRNA uridine(34) hydroxylase (327 aa).

One can recognise a Rhodanese domain in the interval 142–240 (DDPDTLVIDT…YLEQVPEAES (99 aa)). The active-site Cysteine persulfide intermediate is the cysteine 200.

This sequence belongs to the TrhO family.

It carries out the reaction uridine(34) in tRNA + AH2 + O2 = 5-hydroxyuridine(34) in tRNA + A + H2O. Functionally, catalyzes oxygen-dependent 5-hydroxyuridine (ho5U) modification at position 34 in tRNAs. In Synechococcus sp. (strain CC9605), this protein is tRNA uridine(34) hydroxylase.